We begin with the raw amino-acid sequence, 62 residues long: RRCFNHPSSQPQTNKSCPPGENSCYNKQWRDHRGTIIERGCGCPQVKSGIKLRCCQSDDCNN.

The segment covering 1–16 (RRCFNHPSSQPQTNKS) has biased composition (polar residues). The interval 1–21 (RRCFNHPSSQPQTNKSCPPGE) is disordered. Disulfide bonds link Cys-3–Cys-24, Cys-17–Cys-41, Cys-43–Cys-54, and Cys-55–Cys-60.

The protein belongs to the three-finger toxin family. Short-chain subfamily. Type I alpha-neurotoxin sub-subfamily. As to expression, expressed by the venom gland.

It localises to the secreted. Binds to muscle nicotinic acetylcholine receptor (nAChR) and inhibit acetylcholine from binding to the receptor, thereby impairing neuromuscular transmission. In Laticauda crockeri (Crocker's sea snake), this protein is Short neurotoxin B.